We begin with the raw amino-acid sequence, 729 residues long: ATP-dependent RNA helicase DHX15 homolog (729 aa).

Residues 1–25 (MSKRRIEVGETYGSKAKKDPEASSS) are disordered. Positions 82–246 (MRLLSLHQCI…FDNAPLMKVP (165 aa)) constitute a Helicase ATP-binding domain. Position 95–102 (95–102 (GETGSGKT)) interacts with ATP. A DEAH box motif is present at residues 193-196 (DEAH). The Helicase C-terminal domain maps to 271 to 451 (TVIQIHMCEE…TVVLQLKKLG (181 aa)).

Belongs to the DEAD box helicase family. DEAH subfamily. DDX15/PRP43 sub-subfamily.

The enzyme catalyses ATP + H2O = ADP + phosphate + H(+). RNA helicase involved in mRNA processing and antiviral innate immunity. Acts as an activator of the p38 MAPK cascade. This Drosophila melanogaster (Fruit fly) protein is ATP-dependent RNA helicase DHX15 homolog.